Consider the following 503-residue polypeptide: Probable DNA ligase (503 aa).

Glu-210 serves as a coordination point for ATP. Lys-212 acts as the N6-AMP-lysine intermediate in catalysis. ATP contacts are provided by Arg-217, Arg-232, Glu-261, Phe-296, Arg-367, and Lys-373.

It belongs to the ATP-dependent DNA ligase family. It depends on Mg(2+) as a cofactor.

The enzyme catalyses ATP + (deoxyribonucleotide)n-3'-hydroxyl + 5'-phospho-(deoxyribonucleotide)m = (deoxyribonucleotide)n+m + AMP + diphosphate.. In terms of biological role, DNA ligase that seals nicks in double-stranded DNA during DNA replication, DNA recombination and DNA repair. The sequence is that of Probable DNA ligase from Rhodococcus jostii (strain RHA1).